We begin with the raw amino-acid sequence, 179 residues long: Translation initiation factor IF-3 (179 aa).

It belongs to the IF-3 family. Monomer.

Its subcellular location is the cytoplasm. Its function is as follows. IF-3 binds to the 30S ribosomal subunit and shifts the equilibrium between 70S ribosomes and their 50S and 30S subunits in favor of the free subunits, thus enhancing the availability of 30S subunits on which protein synthesis initiation begins. This Lactococcus lactis subsp. lactis (strain IL1403) (Streptococcus lactis) protein is Translation initiation factor IF-3.